A 343-amino-acid polypeptide reads, in one-letter code: MQIGNFNTDKKVFIIAELSANHAGSLEMALKSIKAAKKAGADAIKIQTYTPDSLTLNSDKEDFIIKGGLWDKRKLYELYESAKTPYEWHSQIFETAQNEGILCFSSPFAKEDVEFLKRFDPIAYKIASFEANDENFVRLIAKEKKPTIVSTGIATEEELFKICEIFKEEKNPDLVFLKCTSTYPTAIEDMNLKGIVSLKEKFNVEVGLSDHSFGFLAPVMAVALGARVIEKHFMLDKSIESEDSKFSLDFDEFKAMVDAVRQAESALGDGKLDLDEKVLKNRVFARSLYASKDIKKGEMFSEENVKSVRPSFGLHPKFYQELLGKKASKDIKFGDALKQGDFQ.

An AFP-like domain is found at 287-343 (SLYASKDIKKGEMFSEENVKSVRPSFGLHPKFYQELLGKKASKDIKFGDALKQGDFQ).

It belongs to the pseudaminic acid synthase family. Requires a divalent metal cation as cofactor.

It catalyses the reaction 2,4-diacetamido-2,4,6-trideoxy-beta-L-altrose + phosphoenolpyruvate + H2O = pseudaminate + phosphate. In terms of biological role, catalyzes the fifth step in the biosynthesis of pseudaminic acid, a sialic-acid-like sugar that is used to modify flagellin. Catalyzes the condensation of phosphoenolpyruvate with 2,4-diacetamido-2,4,6-trideoxy-beta-l-altropyranose, forming pseudaminic acid. This Campylobacter jejuni subsp. jejuni serotype O:2 (strain ATCC 700819 / NCTC 11168) protein is Pseudaminic acid synthase (pseI).